The primary structure comprises 736 residues: Elongation factor 2 (736 aa).

Residues aspartate 19–arginine 262 enclose the tr-type G domain. GTP contacts are provided by residues alanine 28–threonine 35, aspartate 94–histidine 98, and asparagine 148–aspartate 151. A Diphthamide modification is found at histidine 602.

Belongs to the TRAFAC class translation factor GTPase superfamily. Classic translation factor GTPase family. EF-G/EF-2 subfamily.

Its subcellular location is the cytoplasm. In terms of biological role, catalyzes the GTP-dependent ribosomal translocation step during translation elongation. During this step, the ribosome changes from the pre-translocational (PRE) to the post-translocational (POST) state as the newly formed A-site-bound peptidyl-tRNA and P-site-bound deacylated tRNA move to the P and E sites, respectively. Catalyzes the coordinated movement of the two tRNA molecules, the mRNA and conformational changes in the ribosome. In Aeropyrum pernix (strain ATCC 700893 / DSM 11879 / JCM 9820 / NBRC 100138 / K1), this protein is Elongation factor 2 (fusA).